The sequence spans 156 residues: MLKLASSLRTGLISRSIRTLAPTVNPAEQQQVQAVLPDKLYSSVEIEYRGHDKAVLKSYTSFLQQVCQHLEIPQGRLEVLPYIRWVQPALRSKFVHKKYKLHYETRTHISKLEILNVTGSTASTFLEYIQRNIPEGVGMRVGFTELQPLPLTIQKN.

The protein belongs to the universal ribosomal protein uS10 family.

The protein localises to the mitochondrion. Ribosomal protein required for normal mitochondrial function and normal larval development. Thought to have a role in insulin/IGF signaling. The chain is Small ribosomal subunit protein uS10m (mrps-10) from Caenorhabditis elegans.